Reading from the N-terminus, the 508-residue chain is Pyruvate kinase, cytosolic isozyme (508 aa).

Residue R48 coordinates substrate. K(+) contacts are provided by N50, S52, D82, and T83. 50–53 (NFSH) contributes to the ATP binding site. R89 and K174 together coordinate ATP. Residue E240 participates in Mg(2+) binding. Residues G263, D264, and T296 each contribute to the substrate site. D264 serves as a coordination point for Mg(2+).

It belongs to the pyruvate kinase family. As to quaternary structure, homotetramer. Mg(2+) serves as cofactor. The cofactor is K(+).

The protein localises to the cytoplasm. It carries out the reaction pyruvate + ATP = phosphoenolpyruvate + ADP + H(+). Its pathway is carbohydrate degradation; glycolysis; pyruvate from D-glyceraldehyde 3-phosphate: step 5/5. This is Pyruvate kinase, cytosolic isozyme from Nicotiana tabacum (Common tobacco).